We begin with the raw amino-acid sequence, 810 residues long: Transmembrane channel-like protein 6 (810 aa).

The segment at 1 to 26 (MAQSLALALDVPETTGDEGLEPSPYE) is disordered. At 1-205 (MAQSLALALD…GAFSCCSRLR (205 aa)) the chain is on the lumenal side. Positions 15–26 (TGDEGLEPSPYE) are enriched in acidic residues. Thr-88 is subject to Phosphothreonine. Position 93 is an omega-N-methylarginine (Arg-93). An N-linked (GlcNAc...) asparagine glycan is attached at Asn-102. Position 104 is a phosphothreonine (Thr-104). Residue Ser-136 is modified to Phosphoserine. Residues 206–226 (YTCMLALHSLGLALLSGLYAA) form a helical membrane-spanning segment. The Cytoplasmic segment spans residues 227–253 (RPWRYALKQIGGQFGSSVLSYFLFLKT). A helical membrane pass occupies residues 254-274 (LLAFNALMLLPLLAFLVGVQA). Over 275–338 (AFPPDPAGPV…PRLGSLPYNM (64 aa)) the chain is Lumenal. N-linked (GlcNAc...) asparagine glycosylation occurs at Asn-311. The helical transmembrane segment at 339–359 (PLAYLFTMGATFFLTCIILVY) threads the bilayer. At 360 to 429 (SMSHSFGESY…PRSVCGQLRQ (70 aa)) the chain is on the cytoplasmic side. A helical membrane pass occupies residues 430-450 (VVVLGLGWLLCLGSTMGCTVA). At 451–468 (VLTFSEVMIQRPASGGQG) the chain is on the lumenal side. Residues 469–489 (VEALALPLVVSVLNLGASYLF) form a helical membrane-spanning segment. Topologically, residues 490–504 (RGLATLERHDSPVLE) are cytoplasmic. A helical transmembrane segment spans residues 505 to 525 (VYMAICRNLILKMAVLGVLCY). The Lumenal portion of the chain corresponds to 526 to 552 (HWLGRRVATLQGQCWEDFVGQELYRFM). The chain crosses the membrane as a helical span at residues 553-573 (VVDFIFMLLDSLFGELVWRLI). Topologically, residues 574–603 (SEKKLKRGQKPEFDIARNVLDLIYGQTLTW) are cytoplasmic. The chain crosses the membrane as a helical span at residues 604-624 (LGVLFSPLLPAVQILRLLFLF). At 625–649 (HIKKASLMANCQAPRRPWLASHMST) the chain is on the lumenal side. A helical membrane pass occupies residues 650 to 670 (VFLTLLCFPSFLGAAVFLCYA). The Cytoplasmic segment spans residues 671-721 (VWQVRPSSTCGPFRTLNTMYEAGTVWVRRLEHAGSGASWLPWLHHFLVENT). Residues 722–742 (FFLFLASALLLAVIYFNIQVV) traverse the membrane as a helical segment. Residues 743–810 (KGQRKVICLL…QKEPCNPRSP (68 aa)) are Lumenal-facing. The tract at residues 775-810 (EEEGRSRPGRTQDATEPPAWHEDGGDQKEPCNPRSP) is disordered. Residues 793 to 810 (AWHEDGGDQKEPCNPRSP) are compositionally biased toward basic and acidic residues.

The protein belongs to the TMC family. Interacts with TMC8. Interacts and forms a complex with TMC8 and CIB1; the interaction stabilizes each component of the complex. Interacts and forms a complex with TMC8 and SLC30A1/ZNT1; the interaction regulates zinc transport into the ER. Widely expressed. Highly expressed in thymus, lung and spleen. Expressed in lymphocytes and peripheral lymphocytes. Expressed in small and medium dorsal root ganglion (DRG) neurons.

The protein resides in the endoplasmic reticulum membrane. Acts as a regulatory protein involved in the regulation of numerous cellular processes. Together with its homolog TMC8/EVER2, forms a complex with calcium-binding protein CIB1 in lymphocytes and keratynocytes where TMC6 and TMC8 stabilize CIB1 and reciprocally. Together with TMC8, also forms a complex with and activates zinc transporter ZNT1 at the ER membrane of keratynocytes, thereby facilitating zinc uptake into the ER. Down-regulates the activity of transcription factors induced by zinc and cytokines. Also plays a role in thermal sensation by inhibiting the M-channel (KCNQ2-KCNQ3 channel) current in primary sensory neurons. This is Transmembrane channel-like protein 6 from Mus musculus (Mouse).